Here is a 191-residue protein sequence, read N- to C-terminus: Ribonuclease M5 1 (191 aa).

The Toprim domain occupies 10–93; the sequence is KEVIVVEGKD…AFLTKHDAAP (84 aa). Residues E16, D62, and D64 each coordinate Mg(2+).

Belongs to the ribonuclease M5 family. Requires Mg(2+) as cofactor.

Its subcellular location is the cytoplasm. It catalyses the reaction Endonucleolytic cleavage of RNA, removing 21 and 42 nucleotides, respectively, from the 5'- and 3'-termini of a 5S-rRNA precursor.. In terms of biological role, required for correct processing of both the 5' and 3' ends of 5S rRNA precursor. Cleaves both sides of a double-stranded region yielding mature 5S rRNA in one step. In Ligilactobacillus salivarius (strain CECT 5713) (Lactobacillus salivarius), this protein is Ribonuclease M5 1.